The primary structure comprises 796 residues: MAETKDVFGQEPHPVEDDLYKERTRKRRKSDRDQRFRAFPSMEQSALKEYEKLESRTRRVLSNTYQKLIQSVFLDDSIPNGVKYLINRLLALIEKPTVDPIYIALFGSTGAGKSSLINAIIQQAMFLPVSGESICTSCIVQVSSGCCVQYEAKIHLLSDQEWREELKNLTKLLHRTEELSREEADAWNRDEAVEEATWKLQMIYGNGAESKNYEELLRAKPKRKIPTSRVITLKAEEAEELSIKLDPYIRTQRRDWDGEAAEMRIWPLIKHVEVTLPKSDLIPEGVVLVDIPGTGDFNSKRDEMWKKTIDKCSVIWVISDIERVSGGQAHEDLLNESIKACQRGFCRDVALVVTKMDKLHLPEYLRERKAGNQAIQSQREAVLERNEMIKLQRTRILKEKLKRKLPADFKVLEASDLVYTVSAQEYWQQALLTEEETEIPKLREYIRKSLLDKKKRTVTKYVTEAFGLLLLTDSFNSTQNLPNEHLHMSVLRRFAEEKVELLEKAIAQCFACMEQPLQEGVRTARTSYRCILRACLVRSKGNQGFHQTLKAVCLKNGIYASRTLARIDLNEALTQPVYDQIDPVFGSIFRTGKPTGSALMPHIDAFKQSLQEKMTEIGIRSGWKYDSCKKNFLIQEISAILGGLEDHILRRKRRIYESLTASVQSDLKLCYEEAAQITGKKACERMKDAIRRGVDRQVAEGMFERAQERMQHQFQQLKTGIVEKVKGSITTMLALASSQGDGLYKELADVGSEYKEMEKLHRSLREVAENARLRKGMQEFLLRASPSKAGPPGTSL.

Basic and acidic residues predominate over residues Met-1–Glu-22. The interval Met-1–Arg-35 is disordered. A GTP-binding site is contributed by Gly-107–Ser-114. Coiled coils occupy residues Ser-158–Asp-185 and Lys-745–Lys-775.

As to expression, expressed in germinal center B-cell and in lymphomas derived from germinal center B-cell.

The protein localises to the nucleus speckle. In terms of biological role, nuclear GTPase found in germinal center B-cells, where it may inhibit function of the activation-induced cytidine deaminase AICDA. Reduces somatic hypermutation in B-cells which may enhance genome stability. This is Nuclear GTPase SLIP-GC (NUGGC) from Homo sapiens (Human).